The following is a 340-amino-acid chain: 4-hydroxythreonine-4-phosphate dehydrogenase (340 aa).

Threonine 135 lines the substrate pocket. Positions 170, 215, and 276 each coordinate a divalent metal cation. Substrate-binding residues include lysine 284, asparagine 293, and arginine 302.

Belongs to the PdxA family. Homodimer. The cofactor is a divalent metal cation.

It is found in the cytoplasm. It catalyses the reaction 4-(phosphooxy)-L-threonine + NAD(+) = 3-amino-2-oxopropyl phosphate + CO2 + NADH. Its pathway is cofactor biosynthesis; pyridoxine 5'-phosphate biosynthesis; pyridoxine 5'-phosphate from D-erythrose 4-phosphate: step 4/5. Its function is as follows. Catalyzes the NAD(P)-dependent oxidation of 4-(phosphooxy)-L-threonine (HTP) into 2-amino-3-oxo-4-(phosphooxy)butyric acid which spontaneously decarboxylates to form 3-amino-2-oxopropyl phosphate (AHAP). The sequence is that of 4-hydroxythreonine-4-phosphate dehydrogenase from Synechococcus sp. (strain JA-2-3B'a(2-13)) (Cyanobacteria bacterium Yellowstone B-Prime).